The following is a 345-amino-acid chain: Tetraacyldisaccharide 4'-kinase (345 aa).

61–68 lines the ATP pocket; the sequence is TAGGTGKT.

This sequence belongs to the LpxK family.

The catalysed reaction is a lipid A disaccharide + ATP = a lipid IVA + ADP + H(+). Its pathway is glycolipid biosynthesis; lipid IV(A) biosynthesis; lipid IV(A) from (3R)-3-hydroxytetradecanoyl-[acyl-carrier-protein] and UDP-N-acetyl-alpha-D-glucosamine: step 6/6. Its function is as follows. Transfers the gamma-phosphate of ATP to the 4'-position of a tetraacyldisaccharide 1-phosphate intermediate (termed DS-1-P) to form tetraacyldisaccharide 1,4'-bis-phosphate (lipid IVA). The polypeptide is Tetraacyldisaccharide 4'-kinase (Xanthomonas euvesicatoria pv. vesicatoria (strain 85-10) (Xanthomonas campestris pv. vesicatoria)).